The primary structure comprises 321 residues: Anthranilate phosphoribosyltransferase (321 aa).

Residues Gly-72, 75–76, Thr-80, 82–85, 99–107, and Ser-111 each bind 5-phospho-alpha-D-ribose 1-diphosphate; these read GD, NVST, and KHGNVSVTS. An anthranilate-binding site is contributed by Gly-72. Ser-84 contributes to the Mg(2+) binding site. Asn-102 lines the anthranilate pocket. Position 157 (Arg-157) interacts with anthranilate. Residues Asp-216 and Glu-217 each coordinate Mg(2+).

Belongs to the anthranilate phosphoribosyltransferase family. In terms of assembly, homodimer. The cofactor is Mg(2+).

The enzyme catalyses N-(5-phospho-beta-D-ribosyl)anthranilate + diphosphate = 5-phospho-alpha-D-ribose 1-diphosphate + anthranilate. The protein operates within amino-acid biosynthesis; L-tryptophan biosynthesis; L-tryptophan from chorismate: step 2/5. Catalyzes the transfer of the phosphoribosyl group of 5-phosphorylribose-1-pyrophosphate (PRPP) to anthranilate to yield N-(5'-phosphoribosyl)-anthranilate (PRA). The protein is Anthranilate phosphoribosyltransferase of Methanococcus vannielii (strain ATCC 35089 / DSM 1224 / JCM 13029 / OCM 148 / SB).